The sequence spans 453 residues: Ribulose bisphosphate carboxylase large chain (453 aa).

Positions 1 to 2 (MS) are excised as a propeptide. P3 is modified (N-acetylproline). K14 is subject to N6,N6,N6-trimethyllysine. Positions 123 and 173 each coordinate substrate. The Proton acceptor role is filled by K175. K177 is a substrate binding site. 3 residues coordinate Mg(2+): K201, D203, and E204. K201 carries the N6-carboxylysine modification. The Proton acceptor role is filled by H294. Residues R295, H327, and S379 each coordinate substrate.

This sequence belongs to the RuBisCO large chain family. Type I subfamily. As to quaternary structure, heterohexadecamer of 8 large chains and 8 small chains; disulfide-linked. The disulfide link is formed within the large subunit homodimers. It depends on Mg(2+) as a cofactor. In terms of processing, the disulfide bond which can form in the large chain dimeric partners within the hexadecamer appears to be associated with oxidative stress and protein turnover.

Its subcellular location is the plastid. The protein localises to the chloroplast. It carries out the reaction 2 (2R)-3-phosphoglycerate + 2 H(+) = D-ribulose 1,5-bisphosphate + CO2 + H2O. The catalysed reaction is D-ribulose 1,5-bisphosphate + O2 = 2-phosphoglycolate + (2R)-3-phosphoglycerate + 2 H(+). In terms of biological role, ruBisCO catalyzes two reactions: the carboxylation of D-ribulose 1,5-bisphosphate, the primary event in carbon dioxide fixation, as well as the oxidative fragmentation of the pentose substrate in the photorespiration process. Both reactions occur simultaneously and in competition at the same active site. The sequence is that of Ribulose bisphosphate carboxylase large chain from Hydnophytum formicarum (Ant plant).